A 262-amino-acid chain; its full sequence is Aquaporin TIP3-1 (262 aa).

2 consecutive transmembrane segments (helical) span residues 27-47 and 61-81; these read AAIS…GSVL and GLVA…AVAV. Positions 89 to 91 match the NPA 1 motif; it reads NPA. A run of 3 helical transmembrane segments spans residues 104–124, 148–168, and 175–195; these read LVRA…ATLL, AVLL…ATVI, and VGTI…LAGG. The short motif at 203–205 is the NPA 2 element; sequence NPA. The helical transmembrane segment at 223 to 243 threads the bilayer; that stretch reads YWLGPFLGAGLAGLVYEYLVI.

Belongs to the MIP/aquaporin (TC 1.A.8) family. TIP (TC 1.A.8.10) subfamily.

The protein resides in the vacuole membrane. Its function is as follows. Aquaporins facilitate the transport of water and small neutral solutes across cell membranes. This is Aquaporin TIP3-1 (TIP3-1) from Zea mays (Maize).